We begin with the raw amino-acid sequence, 488 residues long: Protein DETOXIFICATION 35 (488 aa).

A run of 12 helical transmembrane segments spans residues 38 to 58, 73 to 93, 121 to 141, 150 to 170, 187 to 207, 218 to 238, 262 to 282, 296 to 316, 336 to 356, 379 to 401, 408 to 428, and 439 to 459; these read LWMIAAPVGFNIICQYGVSSV, AVSISLSVIGTFSFGFLLGMG, IILFVSCFFLLPIYIFATPVL, IAVPAGQFTLLTIPQLFSLAF, IAWIGFVALSLHVIMLWLFII, LAFNITNWGTAIAQIVYVIGW, IASAVMLCLEIWYMMSIIVLT, SICMNINGLEAMLFIGINAAI, VYVTVFQSLLIGLVFMVAIII, AYLLGITMVLNSVQPVVSGVAVG, VAYINLGCYYIFGLPFGYLLG, and WSGMIAGTALQTLLLLIVLYK.

The protein belongs to the multi antimicrobial extrusion (MATE) (TC 2.A.66.1) family. In terms of tissue distribution, highly expressed in inflorescence tissues, especially in floral epidermal guard cells including those of the anthers, stigma, siliques and nectaries. Also detected in the meristematic zone of the root apex and in the elongation zone through to the fully expanded cells of the differentiation zone.

It localises to the vacuole membrane. In terms of biological role, multidrug and toxin efflux transporter involved in flavonoid metabolism. Required for proper reproductive development. The protein is Protein DETOXIFICATION 35 of Arabidopsis thaliana (Mouse-ear cress).